The primary structure comprises 241 residues: Ribose-5-phosphate isomerase A (241 aa).

Substrate contacts are provided by residues 29 to 32 (TGTT), 84 to 87 (DGAD), and 97 to 100 (KGGG). E106 acts as the Proton acceptor in catalysis. K124 contributes to the substrate binding site.

Belongs to the ribose 5-phosphate isomerase family. As to quaternary structure, homodimer.

The catalysed reaction is aldehydo-D-ribose 5-phosphate = D-ribulose 5-phosphate. Its pathway is carbohydrate degradation; pentose phosphate pathway; D-ribose 5-phosphate from D-ribulose 5-phosphate (non-oxidative stage): step 1/1. Its function is as follows. Catalyzes the reversible conversion of ribose-5-phosphate to ribulose 5-phosphate. This chain is Ribose-5-phosphate isomerase A, found in Thermoplasma volcanium (strain ATCC 51530 / DSM 4299 / JCM 9571 / NBRC 15438 / GSS1).